Here is a 251-residue protein sequence, read N- to C-terminus: Small ribosomal subunit protein uS2 (251 aa).

The protein belongs to the universal ribosomal protein uS2 family.

In Azoarcus sp. (strain BH72), this protein is Small ribosomal subunit protein uS2.